Here is a 184-residue protein sequence, read N- to C-terminus: UPF0149 protein PP_5201 (184 aa).

The protein belongs to the UPF0149 family.

The polypeptide is UPF0149 protein PP_5201 (Pseudomonas putida (strain ATCC 47054 / DSM 6125 / CFBP 8728 / NCIMB 11950 / KT2440)).